Here is a 701-residue protein sequence, read N- to C-terminus: Larval serum protein 2 (701 aa).

The N-terminal stretch at 1–21 (MKSFTVIALAAVALLATLGQA) is a signal peptide. N204 carries N-linked (GlcNAc...) asparagine glycosylation.

The protein belongs to the hemocyanin family. As to quaternary structure, homohexamer.

Its subcellular location is the secreted. The protein localises to the extracellular space. In terms of biological role, larval storage protein (LSP) which may serve as a store of amino acids for synthesis of adult proteins. This is Larval serum protein 2 (Lsp2) from Drosophila melanogaster (Fruit fly).